The sequence spans 606 residues: Melanoma-associated antigen D2 (606 aa).

A disordered region spans residues Met1 to Arg204. Ser2 is subject to N-acetylserine. A Phosphoserine modification is found at Ser5. A compositionally biased stretch (polar residues) spans Ser24–Val37. Thr72 is modified (phosphothreonine). Residues Thr81 to Gln93 are compositionally biased toward polar residues. Positions Glu122–Asp131 are enriched in basic and acidic residues. Residues Glu142–Glu164 are compositionally biased toward low complexity. Ser157 is subject to Phosphoserine. Basic residues predominate over residues Lys171–Lys181. Ser190, Ser191, Ser194, Ser197, Ser244, and Ser247 each carry phosphoserine. The segment covering Pro248 to Ala260 has biased composition (basic residues). The interval Pro248–Asp275 is disordered. A phosphoserine mark is found at Ser264 and Ser265. The region spanning Leu279–Ala478 is the MAGE domain. The tract at residues Gly534–Ala563 is disordered.

As to quaternary structure, interacts with GNAS. May interact with DNAJB1. Widely expressed. In the developing and adult kidney, expressed in the thick ascending limb of the loop of Henle and the distal convoluted tubules outside the loop.

Functionally, regulates the expression, localization to the plasma membrane and function of the sodium chloride cotransporters SLC12A1 and SLC12A3, two key components of salt reabsorption in the distal renal tubule. This Homo sapiens (Human) protein is Melanoma-associated antigen D2 (MAGED2).